The sequence spans 571 residues: Glutamate--tRNA ligase (571 aa).

Positions 110–120 (PNPNGPATLGS) match the 'HIGH' region motif.

It belongs to the class-I aminoacyl-tRNA synthetase family. Glutamate--tRNA ligase type 2 subfamily.

Its subcellular location is the cytoplasm. The enzyme catalyses tRNA(Glu) + L-glutamate + ATP = L-glutamyl-tRNA(Glu) + AMP + diphosphate. Its function is as follows. Catalyzes the attachment of glutamate to tRNA(Glu) in a two-step reaction: glutamate is first activated by ATP to form Glu-AMP and then transferred to the acceptor end of tRNA(Glu). The protein is Glutamate--tRNA ligase of Methanosarcina barkeri (strain Fusaro / DSM 804).